A 498-amino-acid polypeptide reads, in one-letter code: Phenylalanine--tRNA ligase alpha subunit (498 aa).

L-phenylalanine is bound by residues Thr-328, 372–374 (QVE), and Tyr-412. Glu-414 contributes to the Mg(2+) binding site. Residue Phe-438 participates in L-phenylalanine binding.

This sequence belongs to the class-II aminoacyl-tRNA synthetase family. Phe-tRNA synthetase alpha subunit type 2 subfamily. Tetramer of two alpha and two beta subunits. Mg(2+) serves as cofactor.

It localises to the cytoplasm. It carries out the reaction tRNA(Phe) + L-phenylalanine + ATP = L-phenylalanyl-tRNA(Phe) + AMP + diphosphate + H(+). This chain is Phenylalanine--tRNA ligase alpha subunit, found in Drosophila melanogaster (Fruit fly).